Consider the following 283-residue polypeptide: Polyamine aminopropyltransferase (283 aa).

In terms of domain architecture, PABS spans 5–238 (TTWIDEYHKG…GIWSWTFASS (234 aa)). Gln32 is a binding site for S-methyl-5'-thioadenosine. Spermidine-binding residues include His63 and Asp87. S-methyl-5'-thioadenosine contacts are provided by residues Glu107 and 139–140 (DG). Asp158 acts as the Proton acceptor in catalysis. 158–161 (DCSD) provides a ligand contact to spermidine.

The protein belongs to the spermidine/spermine synthase family. Homodimer or homotetramer.

The protein resides in the cytoplasm. The catalysed reaction is S-adenosyl 3-(methylsulfanyl)propylamine + putrescine = S-methyl-5'-thioadenosine + spermidine + H(+). It functions in the pathway amine and polyamine biosynthesis; spermidine biosynthesis; spermidine from putrescine: step 1/1. Catalyzes the irreversible transfer of a propylamine group from the amino donor S-adenosylmethioninamine (decarboxy-AdoMet) to putrescine (1,4-diaminobutane) to yield spermidine. This is Polyamine aminopropyltransferase from Prochlorococcus marinus (strain AS9601).